We begin with the raw amino-acid sequence, 561 residues long: Arginine--tRNA ligase (561 aa).

The 'HIGH' region signature appears at 119–129 (PNIAKPMSMGH).

Belongs to the class-I aminoacyl-tRNA synthetase family. As to quaternary structure, monomer.

Its subcellular location is the cytoplasm. It carries out the reaction tRNA(Arg) + L-arginine + ATP = L-arginyl-tRNA(Arg) + AMP + diphosphate. The protein is Arginine--tRNA ligase of Lactobacillus acidophilus (strain ATCC 700396 / NCK56 / N2 / NCFM).